Reading from the N-terminus, the 501-residue chain is Lysine--tRNA ligase (501 aa).

Mg(2+) is bound by residues E411 and E418.

This sequence belongs to the class-II aminoacyl-tRNA synthetase family. As to quaternary structure, homodimer. It depends on Mg(2+) as a cofactor.

The protein localises to the cytoplasm. The enzyme catalyses tRNA(Lys) + L-lysine + ATP = L-lysyl-tRNA(Lys) + AMP + diphosphate. This is Lysine--tRNA ligase from Clostridium perfringens (strain 13 / Type A).